The chain runs to 362 residues: Molybdenum import ATP-binding protein ModC (362 aa).

The region spanning 2–236 is the ABC transporter domain; sequence ASPIEVRLQM…LDLPLAMGSD (235 aa). 34–41 contacts ATP; that stretch reads GPSGSGKT. One can recognise a Mop domain in the interval 297–362; that stretch reads QSSILNRLPV…AQIKAVAVLA (66 aa).

This sequence belongs to the ABC transporter superfamily. Molybdate importer (TC 3.A.1.8) family. As to quaternary structure, the complex is composed of two ATP-binding proteins (ModC), two transmembrane proteins (ModB) and a solute-binding protein (ModA).

It localises to the cell inner membrane. It catalyses the reaction molybdate(out) + ATP + H2O = molybdate(in) + ADP + phosphate + H(+). Its function is as follows. Part of the ABC transporter complex ModABC involved in molybdenum import. Responsible for energy coupling to the transport system. The polypeptide is Molybdenum import ATP-binding protein ModC (Pseudomonas syringae pv. syringae (strain B728a)).